A 189-amino-acid chain; its full sequence is Cell division protein SepF (189 aa).

Residues 18–64 (EVTDHEDVAKERPVKVQKTEQTPSQQQRKPERPQETVPPRRQHIKSD) are disordered. Over residues 22–35 (HEDVAKERPVKVQK) the composition is skewed to basic and acidic residues.

This sequence belongs to the SepF family. Homodimer. Interacts with FtsZ.

It localises to the cytoplasm. Its function is as follows. Cell division protein that is part of the divisome complex and is recruited early to the Z-ring. Probably stimulates Z-ring formation, perhaps through the cross-linking of FtsZ protofilaments. Its function overlaps with FtsA. The protein is Cell division protein SepF of Streptococcus thermophilus (strain ATCC BAA-250 / LMG 18311).